Here is a 103-residue protein sequence, read N- to C-terminus: Large ribosomal subunit protein bL21 (103 aa).

This sequence belongs to the bacterial ribosomal protein bL21 family. As to quaternary structure, part of the 50S ribosomal subunit. Contacts protein L20.

In terms of biological role, this protein binds to 23S rRNA in the presence of protein L20. In Shigella sonnei (strain Ss046), this protein is Large ribosomal subunit protein bL21.